Reading from the N-terminus, the 461-residue chain is Integrator complex subunit 12 (461 aa).

The disordered stretch occupies residues 42–131; the sequence is GIDSSYRPTQ…PETRSSPITV (90 aa). Residue Lys-68 forms a Glycyl lysine isopeptide (Lys-Gly) (interchain with G-Cter in SUMO2) linkage. The segment covering 88–124 has biased composition (basic and acidic residues); the sequence is TAEKIKKEAEKRPADKMKDVTEGIDVPKKPRLEKPET. Ser-127 is subject to Phosphoserine. A PHD-type zinc finger spans residues 158 to 214; that stretch reads GLACVVCRQMTVASGNQLVECQECHNLYHQDCHKPQVTDKEVNDPRLVWYCARCTRQ. Lys-253 is covalently cross-linked (Glycyl lysine isopeptide (Lys-Gly) (interchain with G-Cter in SUMO2)). Residues 302–328 are compositionally biased toward polar residues; that stretch reads AGPSTAKLNSAAQNSSGKPAASSSNQK. The tract at residues 302 to 443 is disordered; the sequence is AGPSTAKLNS…PTSQESQLNA (142 aa). Low complexity-rich tracts occupy residues 348-357 and 381-436; these read GSGNSTSPSV and VSKV…GPTS.

This sequence belongs to the Integrator subunit 12 family. In terms of assembly, component of the Integrator complex, composed of core subunits INTS1, INTS2, INTS3, INTS4, INTS5, INTS6, INTS7, INTS8, INTS9/RC74, INTS10, INTS11/CPSF3L, INTS12, INTS13, INTS14 and INTS15. The core complex associates with protein phosphatase 2A subunits PPP2CA and PPP2R1A, to form the Integrator-PP2A (INTAC) complex. Post-translationally, dephosphorylated at Ser-127 by the PNUTS-PP1 complex, promoting RNA polymerase II transcription pause-release.

Its subcellular location is the nucleus. Its function is as follows. Component of the integrator complex, a multiprotein complex that terminates RNA polymerase II (Pol II) transcription in the promoter-proximal region of genes. The integrator complex provides a quality checkpoint during transcription elongation by driving premature transcription termination of transcripts that are unfavorably configured for transcriptional elongation: the complex terminates transcription by (1) catalyzing dephosphorylation of the C-terminal domain (CTD) of Pol II subunit POLR2A/RPB1 and SUPT5H/SPT5, (2) degrading the exiting nascent RNA transcript via endonuclease activity and (3) promoting the release of Pol II from bound DNA. The integrator complex is also involved in terminating the synthesis of non-coding Pol II transcripts, such as enhancer RNAs (eRNAs), small nuclear RNAs (snRNAs), telomerase RNAs and long non-coding RNAs (lncRNAs). Mediates recruitment of cytoplasmic dynein to the nuclear envelope, probably as component of the integrator complex. In Mus musculus (Mouse), this protein is Integrator complex subunit 12 (Ints12).